Consider the following 84-residue polypeptide: UPF0410 protein YmgE (84 aa).

The next 3 membrane-spanning stretches (helical) occupy residues 1-21 (MGIIAWIIFDLIAGIIAKLIM), 27-47 (GGFFLTCILGIVGAVVGGWLA), and 58-78 (GFNLHSFLVAVVGAILVLGIF).

It belongs to the UPF0410 family.

It localises to the cell inner membrane. This Escherichia coli (strain K12) protein is UPF0410 protein YmgE (ymgE).